The following is an 85-amino-acid chain: Phosphocarrier protein HPr (85 aa).

The 85-residue stretch at 1-85 (MFQQEVTITA…HLVKLMAELE (85 aa)) folds into the HPr domain. Residue His15 is the Pros-phosphohistidine intermediate of the active site.

It belongs to the HPr family.

The protein localises to the cytoplasm. Its function is as follows. General (non sugar-specific) component of the phosphoenolpyruvate-dependent sugar phosphotransferase system (sugar PTS). This major carbohydrate active-transport system catalyzes the phosphorylation of incoming sugar substrates concomitantly with their translocation across the cell membrane. The phosphoryl group from phosphoenolpyruvate (PEP) is transferred to the phosphoryl carrier protein HPr by enzyme I. Phospho-HPr then transfers it to the PTS EIIA domain. This chain is Phosphocarrier protein HPr (ptsH), found in Escherichia coli O157:H7.